A 189-amino-acid polypeptide reads, in one-letter code: MEQLCKRILEEGKALNEYVLKVDSFLNHNVDPKLMYEIGTYFKEYFSARGITKIFTIESSGIAPAVMTALQMDIPMVILKKQKPNTLTEDVYQTTVHSFTKGSDYELTLLKKYISDKDKILIIDDFLANGEASLGAVRLVETAGAEVSGIGIVIEKSFQKGRKCLEEKGYDIYSLARIKKLGKDLIEFL.

Positions 20 and 27 each coordinate xanthine. A 5-phospho-alpha-D-ribose 1-diphosphate-binding site is contributed by 128–132 (ANGEA). Position 156 (Lys-156) interacts with xanthine.

This sequence belongs to the purine/pyrimidine phosphoribosyltransferase family. Xpt subfamily. Homodimer.

It is found in the cytoplasm. The enzyme catalyses XMP + diphosphate = xanthine + 5-phospho-alpha-D-ribose 1-diphosphate. The protein operates within purine metabolism; XMP biosynthesis via salvage pathway; XMP from xanthine: step 1/1. In terms of biological role, converts the preformed base xanthine, a product of nucleic acid breakdown, to xanthosine 5'-monophosphate (XMP), so it can be reused for RNA or DNA synthesis. The chain is Xanthine phosphoribosyltransferase from Clostridium acetobutylicum (strain ATCC 824 / DSM 792 / JCM 1419 / IAM 19013 / LMG 5710 / NBRC 13948 / NRRL B-527 / VKM B-1787 / 2291 / W).